The chain runs to 943 residues: UvrABC system protein A (943 aa).

Residue Gly-31–Ser-38 coordinates ATP. A C4-type zinc finger spans residues Cys-253–Cys-280. 2 ABC transporter domains span residues Trp-310–Ile-587 and Leu-607–Lys-937. Gly-640–Ser-647 serves as a coordination point for ATP. The segment at Cys-740–Cys-766 adopts a C4-type zinc-finger fold.

The protein belongs to the ABC transporter superfamily. UvrA family. Forms a heterotetramer with UvrB during the search for lesions.

It localises to the cytoplasm. Functionally, the UvrABC repair system catalyzes the recognition and processing of DNA lesions. UvrA is an ATPase and a DNA-binding protein. A damage recognition complex composed of 2 UvrA and 2 UvrB subunits scans DNA for abnormalities. When the presence of a lesion has been verified by UvrB, the UvrA molecules dissociate. The protein is UvrABC system protein A of Haemophilus influenzae (strain ATCC 51907 / DSM 11121 / KW20 / Rd).